Consider the following 577-residue polypeptide: Arginine--tRNA ligase (577 aa).

A 'HIGH' region motif is present at residues 122–132 (PNVAKEMHVGH).

It belongs to the class-I aminoacyl-tRNA synthetase family. In terms of assembly, monomer.

It is found in the cytoplasm. The enzyme catalyses tRNA(Arg) + L-arginine + ATP = L-arginyl-tRNA(Arg) + AMP + diphosphate. This chain is Arginine--tRNA ligase, found in Salmonella dublin (strain CT_02021853).